We begin with the raw amino-acid sequence, 1582 residues long: Adhesion G protein-coupled receptor B1 (1582 aa).

Positions 1 to 33 are cleaved as a signal peptide; sequence MRGQAAAPGPIWILAPLLLLLLLLGRWARAASG. Residues 34-948 are Extracellular-facing; sequence ADIGPGTEQC…ATMDKVTVPS (915 aa). Asparagine 64 is a glycosylation site (N-linked (GlcNAc...) asparagine). Positions 261 to 315 constitute a TSP type-1 1 domain; that stretch reads AGGWKLWSLWGECTRDCGGGLQTRTRTCLPTLGVEGGGCEGVLEEGRLCNRKACG. Intrachain disulfides connect cysteine 273–cysteine 309, cysteine 277–cysteine 314, and cysteine 288–cysteine 299. The tract at residues 313–335 is disordered; that stretch reads ACGPTGRSSSRSQSLRSTDARRR. Over residues 319 to 329 the composition is skewed to low complexity; that stretch reads RSSSRSQSLRS. TSP type-1 domains lie at 354 to 407, 409 to 462, 467 to 520, and 522 to 575; these read DPAA…AVCP, HGAW…ALCP, DGNW…QQCP, and DGKW…QRCP. Disulfide bonds link cysteine 366–cysteine 400, cysteine 370–cysteine 406, cysteine 381–cysteine 390, cysteine 421–cysteine 456, cysteine 425–cysteine 461, cysteine 436–cysteine 446, cysteine 479–cysteine 514, cysteine 483–cysteine 519, cysteine 494–cysteine 504, cysteine 534–cysteine 569, cysteine 538–cysteine 574, cysteine 549–cysteine 559, cysteine 581–cysteine 616, and cysteine 604–cysteine 634. Asparagine 401 carries an N-linked (GlcNAc...) asparagine glycan. Residue asparagine 607 is glycosylated (N-linked (GlcNAc...) asparagine). Residue threonine 609 is modified to Phosphothreonine. Residues asparagine 692, asparagine 844, asparagine 877, and asparagine 881 are each glycosylated (N-linked (GlcNAc...) asparagine). In terms of domain architecture, GAIN-B spans 760-939; sequence RDAYQVTDNL…AILAQLSADA (180 aa). 2 disulfide bridges follow: cysteine 884/cysteine 921 and cysteine 909/cysteine 923. The GPS stretch occupies residues 884–939; sequence CILWDETDGPSSSAPPQLGPWSWRGCRTVPLDALRTRCLCDRLSTFAILAQLSADA. Residues 927 to 943 form an N-terminal stalk following vasculostatin-120 cleavage which is not required for signaling activity region; it reads STFAILAQLSADATMDK. Residues 949-969 traverse the membrane as a helical segment; sequence VTLIVGCGVSSLTLLMLVIIY. At 970–980 the chain is on the cytoplasmic side; sequence VSVWRYIRSER. The chain crosses the membrane as a helical span at residues 981–1001; it reads SVILINFCLSIISSNALILIG. The Extracellular segment spans residues 1002 to 1008; that stretch reads QTQTRNK. The helical transmembrane segment at 1009-1029 threads the bilayer; the sequence is VVCTLVAAFLHFFFLSSFCWV. At 1030–1052 the chain is on the cytoplasmic side; that stretch reads LTEAWQSYMAVTGRLRSRLVRKR. Residues 1053 to 1073 form a helical membrane-spanning segment; sequence FLCLGWGLPALVVAISVGFTK. The Extracellular segment spans residues 1074 to 1093; sequence AKGYSTMNYCWLSLEGGLLY. Residues 1094-1114 form a helical membrane-spanning segment; it reads AFVGPAAAVVLVNMVIGILVF. The Cytoplasmic portion of the chain corresponds to 1115 to 1136; that stretch reads NKLVSKDGITDKKLKERAGASL. The helical transmembrane segment at 1137-1157 threads the bilayer; it reads WSSCVVLPLLALTWMSAVLAV. The Extracellular segment spans residues 1158–1166; the sequence is TDRRSALFQ. A helical membrane pass occupies residues 1167-1187; the sequence is ILFAVFDSLEGFVIVMVHCIL. Residues 1188 to 1582 are Cytoplasmic-facing; that stretch reads RREVQDAVKC…QDIIDLQTEV (395 aa). Positions 1363–1582 are involved in interaction with MAGI1; sequence YSINIDQMPQ…QDIIDLQTEV (220 aa). The interval 1382–1549 is disordered; the sequence is PDASFPTRSP…AWVKKELEPL (168 aa). The segment covering 1389-1435 has biased composition (pro residues); sequence RSPPAREPPGGAPPEVPPVQPPPPPPPPPPPPQQPIPPPPTLEPAPP. Residues 1441–1455 are compositionally biased toward low complexity; that stretch reads GEPAAHPGPSSGAGA. At serine 1467 the chain carries Phosphoserine. 2 stretches are compositionally biased toward basic and acidic residues: residues 1468–1484 and 1491–1520; these read LERR…EKIM and QDMF…KPEK. Residues 1579-1582 form an indispensable for interaction with MAGI1 region; sequence QTEV.

This sequence belongs to the G-protein coupled receptor 2 family. LN-TM7 subfamily. As to quaternary structure, interacts with ELMO1 and DOCK1. When bound to ELMO1 and DOCK1, acts as a module to promote apoptotic cell engulfment. Interacts with MDM2; the interaction results in inhibition of MDM2-mediated ubiquitination and degradation of DLG4/PSD95. Interacts with PARD3 and TIAM1; the interaction is required for correct dendritic localization of PARD3 and TIAM1 and for dendritic spine formation. Interacts with MAGI1, MAGI3 and BAIAP2. Interacts with PHYHIP. Interacts with DLG4 (via PDZ domain). Vasculostatin-120: Interacts with CD36. Vasculostatin-120: Interacts with ARRB2. Interacts with BAIAP3; this interaction is direct. Proteolytically cleaved to produce vasculostatin-40 and vasculostatin-120. Vasculostatin-40 is the major form and is produced through proteolytic cleavage by MMP14 between residues 321 and 329 with cleavage likely to be between Ser-326 and Leu-327. Post-translationally, ubiquitinated. In brain, widespread expression in all neuropil-rich zones including spinal cord gray matter, cerebellar molecular layer, cerebral cortex, thalamic nuclei and basal ganglia with no expression in white matter (at protein level). In the cerebellar molecular layer, highly expressed in interneuron processes whereas Purkinje cells and their dendrites show weaker expression (at protein level). In the olfactory bulb, highly expressed in glomeruli (at protein level). In the retina, highly concentrated in the outer and inner plexiform layers (at protein level). Expressed in brain. Enriched in hippocampus and cortex. Also detected in other tissues including bone marrow and spleen.

It is found in the cell membrane. Its subcellular location is the cell projection. It localises to the phagocytic cup. The protein localises to the cell junction. The protein resides in the focal adhesion. It is found in the dendritic spine. Its subcellular location is the postsynaptic density. It localises to the secreted. Its function is as follows. Phosphatidylserine receptor which enhances the engulfment of apoptotic cells. Also mediates the binding and engulfment of Gram-negative bacteria. Stimulates production of reactive oxygen species by macrophages in response to Gram-negative bacteria, resulting in enhanced microbicidal macrophage activity. In the gastric mucosa, required for recognition and engulfment of apoptotic gastric epithelial cells. Promotes myoblast fusion. Activates the Rho pathway in a G-protein-dependent manner. Inhibits MDM2-mediated ubiquitination and degradation of DLG4/PSD95, promoting DLG4 stability and regulating synaptic plasticity. Required for the formation of dendritic spines by ensuring the correct localization of PARD3 and TIAM1. Potent inhibitor of angiogenesis in brain and may play a significant role as a mediator of the p53/TP53 signal in suppression of glioblastoma. Functionally, inhibits angiogenesis in a CD36-dependent manner. In terms of biological role, inhibits angiogenesis. This is Adhesion G protein-coupled receptor B1 from Mus musculus (Mouse).